A 316-amino-acid polypeptide reads, in one-letter code: Mitochondrial distribution and morphology protein 12 (316 aa).

Positions 1-312 (MSIDLEWNGL…FPNFHTLVLG (312 aa)) constitute an SMP-LTD domain.

This sequence belongs to the MDM12 family. Component of the ER-mitochondria encounter structure (ERMES) or MDM complex, composed of MMM1, MDM10, MDM12 and MDM34. An MMM1 homodimer associates with one molecule of MDM12 on each side in a pairwise head-to-tail manner, and the SMP-LTD domains of MMM1 and MDM12 generate a continuous hydrophobic tunnel for phospholipid trafficking.

The protein resides in the mitochondrion outer membrane. Its subcellular location is the endoplasmic reticulum membrane. Its function is as follows. Component of the ERMES/MDM complex, which serves as a molecular tether to connect the endoplasmic reticulum (ER) and mitochondria. Components of this complex are involved in the control of mitochondrial shape and protein biogenesis, and function in nonvesicular lipid trafficking between the ER and mitochondria. MDM12 is required for the interaction of the ER-resident membrane protein MMM1 and the outer mitochondrial membrane-resident beta-barrel protein MDM10. The MDM12-MMM1 subcomplex functions in the major beta-barrel assembly pathway that is responsible for biogenesis of all mitochondrial outer membrane beta-barrel proteins, and acts in a late step after the SAM complex. The MDM10-MDM12-MMM1 subcomplex further acts in the TOM40-specific pathway after the action of the MDM12-MMM1 complex. Essential for establishing and maintaining the structure of mitochondria and maintenance of mtDNA nucleoids. The sequence is that of Mitochondrial distribution and morphology protein 12 from Postia placenta (strain ATCC 44394 / Madison 698-R) (Brown rot fungus).